A 356-amino-acid chain; its full sequence is GDSL esterase/lipase At2g36325 (356 aa).

The first 26 residues, Met-1–Ser-26, serve as a signal peptide directing secretion. The N-linked (GlcNAc...) asparagine glycan is linked to Asn-25. Ser-54 (nucleophile) is an active-site residue. N-linked (GlcNAc...) asparagine glycans are attached at residues Asn-165, Asn-185, and Asn-240. Catalysis depends on residues Asp-334 and His-337.

Belongs to the 'GDSL' lipolytic enzyme family.

It localises to the secreted. The chain is GDSL esterase/lipase At2g36325 from Arabidopsis thaliana (Mouse-ear cress).